We begin with the raw amino-acid sequence, 372 residues long: D-alanine--D-alanine ligase (372 aa).

Residues 145 to 349 (KTVLRAGGIP…CPNLLDQLIE (205 aa)) enclose the ATP-grasp domain. 176–231 (DRWGTSELFVKAVSLGSSVATLPVKTETEFTKAVKEVFRYDDRLMVEPRIRGREIE) contacts ATP. Mg(2+)-binding residues include Asp-303, Glu-316, and Asn-318.

It belongs to the D-alanine--D-alanine ligase family. It depends on Mg(2+) as a cofactor. Mn(2+) serves as cofactor.

Its subcellular location is the cytoplasm. It carries out the reaction 2 D-alanine + ATP = D-alanyl-D-alanine + ADP + phosphate + H(+). It functions in the pathway cell wall biogenesis; peptidoglycan biosynthesis. Functionally, cell wall formation. The polypeptide is D-alanine--D-alanine ligase (Coxiella burnetii (strain RSA 331 / Henzerling II)).